We begin with the raw amino-acid sequence, 402 residues long: Calcium-responsive transactivator (402 aa).

Residues 1–148 (MSVAFASARP…TLPTTSMSLS (148 aa)) are N-terminal auto-inhibitory domain; necessary for interaction with SMARCA4/BRG1. Residues 50 to 53 (YQQI) carry the SH2-binding motif. 2 disordered regions span residues 72-171 (QSLL…VPMQ) and 221-402 (AMMG…NYQQ). Low complexity predominate over residues 85 to 106 (LGPGALSQSGSSQGLHPQGSLS). Composition is skewed to polar residues over residues 128-149 (NHVS…SLSG) and 161-171 (SGPTSQSVPMQ). Residues 149–238 (GSGHGTGPGY…GGSMMGQRPM (90 aa)) form a methionine-rich intra-molecular domain region. Low complexity predominate over residues 233–251 (MGQRPMAPYRPSQQGSSQQ). Residues 252–323 (YLGQEEYYSE…SQYSQQQAGY (72 aa)) form an MFD domain region. The span at 261–277 (EQYSHSQGSAEPMSQQY) shows a compositional bias: polar residues. A compositionally biased stretch (basic and acidic residues) spans 296 to 305 (SYDRSFEDPT). Residues 311-375 (GGNSQYSQQQ…QGQGQQYGSY (65 aa)) show a composition bias toward low complexity. A necessary for nuclear localization region spans residues 340 to 402 (NQQSYPGQQQ…EQGQYGNYQQ (63 aa)). The SH2-binding motif lies at 359 to 362 (SQYS). Polar residues predominate over residues 376-388 (RTSQTGPSAQQQR). The SH3-binding motif lies at 377–385 (TSQTGPSAQ). The span at 390–402 (YGYEQGQYGNYQQ) shows a compositional bias: low complexity. Residues 393–402 (EQGQYGNYQQ) form a necessary for interaction with CREBBP and for the recruitment of CREBBP to the nuclear bodies region. Positions 397-400 (YGNY) match the SH2-binding motif.

The protein belongs to the SS18 family. As to quaternary structure, homodimer. Dimerization may be necessary for its function in neuronal dendritic development. Interacts (via C-terminus) with CREBBP (via N-terminus), EP300 and SMARCA4/BRG1. Interacts with the nBAF complex. Association with CREBBP facilitates transcription while the association with SMARCA4/BRG1 suppresses CREST-mediated transcription in resting neurons.

The protein localises to the nucleus. The protein resides in the chromosome. It is found in the centromere. It localises to the kinetochore. Its function is as follows. Transcriptional activator which is required for calcium-dependent dendritic growth and branching in cortical neurons. Recruits CREB-binding protein (CREBBP) to nuclear bodies. Component of the CREST-BRG1 complex, a multiprotein complex that regulates promoter activation by orchestrating a calcium-dependent release of a repressor complex and a recruitment of an activator complex. In resting neurons, transcription of the c-FOS promoter is inhibited by BRG1-dependent recruitment of a phospho-RB1-HDAC1 repressor complex. Upon calcium influx, RB1 is dephosphorylated by calcineurin, which leads to release of the repressor complex. At the same time, there is increased recruitment of CREBBP to the promoter by a CREST-dependent mechanism, which leads to transcriptional activation. The CREST-BRG1 complex also binds to the NR2B promoter, and activity-dependent induction of NR2B expression involves a release of HDAC1 and recruitment of CREBBP. The polypeptide is Calcium-responsive transactivator (Ss18l1) (Mus musculus (Mouse)).